Reading from the N-terminus, the 193-residue chain is uncharacterized protein (193 aa).

This is an uncharacterized protein from Saccharomyces cerevisiae (strain ATCC 204508 / S288c) (Baker's yeast).